The following is a 410-amino-acid chain: Translation initiation factor 2 subunit gamma (410 aa).

The 198-residue stretch at 6-203 folds into the tr-type G domain; it reads QSEVNIGMVG…AIQEFIPTPK (198 aa). A G1 region spans residues 15-22; that stretch reads GHVDHGKT. Mg(2+)-binding residues include Asp18, Thr22, Gly43, and Ser45. Residue 18–23 participates in GTP binding; it reads DHGKTS. A G2 region spans residues 43 to 47; the sequence is GISIR. Zn(2+) is bound by residues Cys58, Cys61, Cys73, and Cys76. A G3 region spans residues 90–93; that stretch reads DAPG. GTP contacts are provided by residues 146–149 and 181–183; these read NKID and SAH. Residues 146 to 149 are G4; the sequence is NKID. The segment at 181–183 is G5; the sequence is SAH.

Belongs to the TRAFAC class translation factor GTPase superfamily. Classic translation factor GTPase family. EIF2G subfamily. Heterotrimer composed of an alpha, a beta and a gamma chain. Mg(2+) serves as cofactor.

The enzyme catalyses GTP + H2O = GDP + phosphate + H(+). Functionally, eIF-2 functions in the early steps of protein synthesis by forming a ternary complex with GTP and initiator tRNA. This is Translation initiation factor 2 subunit gamma from Methanococcus maripaludis (strain C6 / ATCC BAA-1332).